A 135-amino-acid polypeptide reads, in one-letter code: Large ribosomal subunit protein uL16c (135 aa).

Belongs to the universal ribosomal protein uL16 family. As to quaternary structure, part of the 50S ribosomal subunit.

It is found in the plastid. It localises to the chloroplast. This Nandina domestica (Heavenly bamboo) protein is Large ribosomal subunit protein uL16c.